Reading from the N-terminus, the 362-residue chain is Chalcone synthase A (362 aa).

The active site involves Cys-168.

It belongs to the thiolase-like superfamily. Chalcone/stilbene synthases family.

The enzyme catalyses (E)-4-coumaroyl-CoA + 3 malonyl-CoA + 3 H(+) = 2',4,4',6'-tetrahydroxychalcone + 3 CO2 + 4 CoA. Its pathway is secondary metabolite biosynthesis; flavonoid biosynthesis. Functionally, the primary product of this enzyme is 4,2',4',6'-tetrahydroxychalcone (also termed naringenin-chalcone or chalcone) which can under specific conditions spontaneously isomerize into naringenin. The polypeptide is Chalcone synthase A (CHSA) (Ipomoea triloba (Trilobed morning glory)).